The sequence spans 536 residues: Probable monofunctional riboflavin biosynthesis protein RIBA 3, chloroplastic (536 aa).

The transit peptide at 1–43 directs the protein to the chloroplast; it reads MDRVLLSSQLSSQTVVNTRVQQGSGGINSIGFAVIRKGSLKLR. Residues 44 to 310 are inactive DHBP synthase; the sequence is CYAIGGLGGG…IADLIRYRRK (267 aa). D-ribulose 5-phosphate-binding positions include 133–134, Asp-138, and 248–252; these read GD and RAGHT. Residues 311-536 are GTP cyclohydrolase II; that stretch reads REKLVELIAV…GDQDEDDTHN (226 aa). 361-365 is a binding site for GTP; the sequence is RVHSE. 3 residues coordinate Zn(2+): Cys-366, Cys-377, and Cys-379. GTP-binding positions include Gln-382, 405–407, and Thr-427; that span reads EGR. Asp-439 functions as the Proton acceptor; for GTP cyclohydrolase activity in the catalytic mechanism. The active-site Nucleophile; for GTP cyclohydrolase activity is the Arg-441. The GTP site is built by Thr-462 and Lys-467. A disordered region spans residues 507–536; sequence YGSDLPGNVPEEFLNPDDIAGDQDEDDTHN. A compositionally biased stretch (acidic residues) spans 525-536; that stretch reads IAGDQDEDDTHN.

In the N-terminal section; belongs to the DHBP synthase family. The protein in the C-terminal section; belongs to the GTP cyclohydrolase II family. It depends on Zn(2+) as a cofactor.

It is found in the plastid. Its subcellular location is the chloroplast. The catalysed reaction is GTP + 4 H2O = 2,5-diamino-6-hydroxy-4-(5-phosphoribosylamino)-pyrimidine + formate + 2 phosphate + 3 H(+). It participates in cofactor biosynthesis; riboflavin biosynthesis; 5-amino-6-(D-ribitylamino)uracil from GTP: step 1/4. Functionally, involved in riboflavin biosynthesis. Catalyzes the conversion of GTP to 2,5-diamino-6-ribosylamino-4(3H)-pyrimidinone 5'-phosphate (DARP), formate and pyrophosphate. The protein is Probable monofunctional riboflavin biosynthesis protein RIBA 3, chloroplastic (RIBA3) of Oryza sativa subsp. japonica (Rice).